We begin with the raw amino-acid sequence, 75 residues long: Translational regulator CsrA (75 aa).

This sequence belongs to the CsrA/RsmA family. As to quaternary structure, homodimer; the beta-strands of each monomer intercalate to form a hydrophobic core, while the alpha-helices form wings that extend away from the core.

The protein resides in the cytoplasm. Functionally, a translational regulator that binds mRNA to regulate translation initiation and/or mRNA stability. Usually binds in the 5'-UTR at or near the Shine-Dalgarno sequence preventing ribosome-binding, thus repressing translation. Its main target seems to be the major flagellin gene, while its function is anatagonized by FliW. This is Translational regulator CsrA from Acetivibrio thermocellus (strain ATCC 27405 / DSM 1237 / JCM 9322 / NBRC 103400 / NCIMB 10682 / NRRL B-4536 / VPI 7372) (Clostridium thermocellum).